Reading from the N-terminus, the 331-residue chain is MELHQLIAHKEKRWRATLLVMLAVLLVLSALYLMVGEVFLSPFSSLSSFEHKLLVDLRLPRLVAAMVIGAALAVSGATLQVLLGNVLAEPGVLGISGGASLAMVIALFLLPVMPTPTVFMLAAIIGALVFTLILVGMARAMHLSTSRMLLVGVALGILSGAFVTWAFYFSDDLSLRQLMYWLMGSIGGASWHHHLVTLVLLPVLVWLCLQGQTLDKLMLGETHAAQLGVDVHKVRWRLILAISILIGCAVALGGIISFVGLVVPHLLRMAFGSENRFLLPLSAFAGATLLVFSDIWARTLLDSAELPLGVMTTTIGAPIFIWMLIRSHDAH.

A run of 9 helical transmembrane segments spans residues 20 to 42 (VMLA…FLSP), 62 to 84 (LVAA…VLLG), 91 to 113 (GVLG…LPVM), 117 to 136 (TVFM…ILVG), 148 to 170 (MLLV…FYFS), 190 to 209 (SWHH…WLCL), 240 to 262 (LAIS…VGLV), 277 to 296 (FLLP…SDIW), and 303 to 325 (SAEL…WMLI).

The protein belongs to the binding-protein-dependent transport system permease family. FecCD subfamily. The complex is composed of two ATP-binding proteins (BtuD), two transmembrane proteins (BtuC) and a solute-binding protein (BtuF).

Its subcellular location is the cell inner membrane. Its function is as follows. Part of the ABC transporter complex BtuCDF involved in vitamin B12 import. Involved in the translocation of the substrate across the membrane. The protein is Vitamin B12 import system permease protein BtuC of Vibrio vulnificus (strain CMCP6).